We begin with the raw amino-acid sequence, 344 residues long: Protein RecA (344 aa).

Gly-66 to Thr-73 is a binding site for ATP.

The protein belongs to the RecA family.

It is found in the cytoplasm. In terms of biological role, can catalyze the hydrolysis of ATP in the presence of single-stranded DNA, the ATP-dependent uptake of single-stranded DNA by duplex DNA, and the ATP-dependent hybridization of homologous single-stranded DNAs. It interacts with LexA causing its activation and leading to its autocatalytic cleavage. This Methylobacillus flagellatus (strain ATCC 51484 / DSM 6875 / VKM B-1610 / KT) protein is Protein RecA.